The sequence spans 156 residues: ATP synthase subunit b (156 aa).

The helical transmembrane segment at 7 to 29 (LIGQSLTFIAFILFCMKYVWPQL) threads the bilayer.

It belongs to the ATPase B chain family. In terms of assembly, F-type ATPases have 2 components, F(1) - the catalytic core - and F(0) - the membrane proton channel. F(1) has five subunits: alpha(3), beta(3), gamma(1), delta(1), epsilon(1). F(0) has three main subunits: a(1), b(2) and c(10-14). The alpha and beta chains form an alternating ring which encloses part of the gamma chain. F(1) is attached to F(0) by a central stalk formed by the gamma and epsilon chains, while a peripheral stalk is formed by the delta and b chains.

It localises to the cell inner membrane. In terms of biological role, f(1)F(0) ATP synthase produces ATP from ADP in the presence of a proton or sodium gradient. F-type ATPases consist of two structural domains, F(1) containing the extramembraneous catalytic core and F(0) containing the membrane proton channel, linked together by a central stalk and a peripheral stalk. During catalysis, ATP synthesis in the catalytic domain of F(1) is coupled via a rotary mechanism of the central stalk subunits to proton translocation. Component of the F(0) channel, it forms part of the peripheral stalk, linking F(1) to F(0). This Saccharophagus degradans (strain 2-40 / ATCC 43961 / DSM 17024) protein is ATP synthase subunit b.